We begin with the raw amino-acid sequence, 151 residues long: Arginine repressor (151 aa).

This sequence belongs to the ArgR family.

It is found in the cytoplasm. It participates in amino-acid biosynthesis; L-arginine biosynthesis [regulation]. Regulates arginine biosynthesis genes. This is Arginine repressor from Heliobacterium modesticaldum (strain ATCC 51547 / Ice1).